Here is a 353-residue protein sequence, read N- to C-terminus: Photosystem II D2 protein (353 aa).

Threonine 2 bears the N-acetylthreonine mark. The residue at position 2 (threonine 2) is a Phosphothreonine. The chain crosses the membrane as a helical span at residues 41–61 (CAYFALGGWFTGTTFVTSWYT). A chlorophyll a-binding site is contributed by histidine 118. Residues 125 to 141 (GFMLRQFELSRSVQLRP) traverse the membrane as a helical segment. 2 residues coordinate pheophytin a: glutamine 130 and asparagine 143. Residues 153–166 (VFVSVFLIYPLGQS) form a helical membrane-spanning segment. Residue histidine 198 coordinates chlorophyll a. A helical membrane pass occupies residues 208 to 228 (AALLCAIHGATVENTLFEDGD). Residues histidine 215 and phenylalanine 262 each coordinate a plastoquinone. Residue histidine 215 coordinates Fe cation. Histidine 269 provides a ligand contact to Fe cation. A helical transmembrane segment spans residues 279–295 (GLWMSALGVVGLALNLR).

This sequence belongs to the reaction center PufL/M/PsbA/D family. PSII is composed of 1 copy each of membrane proteins PsbA, PsbB, PsbC, PsbD, PsbE, PsbF, PsbH, PsbI, PsbJ, PsbK, PsbL, PsbM, PsbT, PsbX, PsbY, PsbZ, Psb30/Ycf12, at least 3 peripheral proteins of the oxygen-evolving complex and a large number of cofactors. It forms dimeric complexes. The D1/D2 heterodimer binds P680, chlorophylls that are the primary electron donor of PSII, and subsequent electron acceptors. It shares a non-heme iron and each subunit binds pheophytin, quinone, additional chlorophylls, carotenoids and lipids. There is also a Cl(-1) ion associated with D1 and D2, which is required for oxygen evolution. The PSII complex binds additional chlorophylls, carotenoids and specific lipids. serves as cofactor.

It localises to the plastid. The protein resides in the chloroplast thylakoid membrane. The catalysed reaction is 2 a plastoquinone + 4 hnu + 2 H2O = 2 a plastoquinol + O2. Its function is as follows. Photosystem II (PSII) is a light-driven water:plastoquinone oxidoreductase that uses light energy to abstract electrons from H(2)O, generating O(2) and a proton gradient subsequently used for ATP formation. It consists of a core antenna complex that captures photons, and an electron transfer chain that converts photonic excitation into a charge separation. The D1/D2 (PsbA/PsbD) reaction center heterodimer binds P680, the primary electron donor of PSII as well as several subsequent electron acceptors. D2 is needed for assembly of a stable PSII complex. This chain is Photosystem II D2 protein, found in Arabis hirsuta (Hairy rock-cress).